A 309-amino-acid chain; its full sequence is Transaldolase (309 aa).

The Schiff-base intermediate with substrate role is filled by Lys-125.

It belongs to the transaldolase family. Type 1 subfamily. As to quaternary structure, homodimer.

The protein resides in the cytoplasm. The enzyme catalyses D-sedoheptulose 7-phosphate + D-glyceraldehyde 3-phosphate = D-erythrose 4-phosphate + beta-D-fructose 6-phosphate. Its pathway is carbohydrate degradation; pentose phosphate pathway; D-glyceraldehyde 3-phosphate and beta-D-fructose 6-phosphate from D-ribose 5-phosphate and D-xylulose 5-phosphate (non-oxidative stage): step 2/3. Transaldolase is important for the balance of metabolites in the pentose-phosphate pathway. The protein is Transaldolase of Pseudomonas syringae pv. tomato (strain ATCC BAA-871 / DC3000).